The primary structure comprises 111 residues: Ig heavy chain V-III region HPC76 (111 aa).

An Ig-like domain is found at 1–110; it reads ESGGGLVQPG…WGQGTTLTVS (110 aa).

In Mus musculus (Mouse), this protein is Ig heavy chain V-III region HPC76.